Reading from the N-terminus, the 138-residue chain is Proofreading thioesterase EntH (138 aa).

Glutamate 64 acts as the Nucleophile or proton acceptor in catalysis.

Belongs to the thioesterase PaaI family. In terms of assembly, homotetramer. Dimer of dimers. Interacts specifically with the aryl carrier protein (ArCP) domain of EntB.

The protein resides in the cytoplasm. The protein operates within siderophore biosynthesis; enterobactin biosynthesis. Its function is as follows. Required for optimal enterobactin synthesis. Acts as a proofreading enzyme that prevents EntB misacylation by hydrolyzing the thioester bound existing between EntB and wrongly charged molecules. The sequence is that of Proofreading thioesterase EntH from Salmonella arizonae (strain ATCC BAA-731 / CDC346-86 / RSK2980).